The chain runs to 246 residues: Small ribosomal subunit protein uS2 (246 aa).

This sequence belongs to the universal ribosomal protein uS2 family.

In Dictyoglomus thermophilum (strain ATCC 35947 / DSM 3960 / H-6-12), this protein is Small ribosomal subunit protein uS2.